Consider the following 202-residue polypeptide: Transmembrane protein 223 (202 aa).

At 1-43 the chain is on the mitochondrial matrix side; sequence MAAPGRRWSVLLFRALQSLSARRALHDTAPPRDVLLFEHERGR. Residues 44 to 64 form a helical membrane-spanning segment; the sequence is FFAVLGLFCAGQGVFWASLAI. Over 65–97 the chain is Mitochondrial intermembrane; the sequence is ASLARPPTPVRPTDAKTPDHGGLDLRSTLWRYG. Residues 98 to 118 traverse the membrane as a helical segment; the sequence is LAVGCGAIGSLVLGAGLLFSL. Residues 119–202 are Mitochondrial matrix-facing; sequence RSVRSVMLRA…DNTVGAYRSL (84 aa).

The protein belongs to the TMEM223 family. In terms of assembly, associates with the mitochondrial ribosome.

Its subcellular location is the mitochondrion inner membrane. Mitochondrial ribosome-associated protein involved in the first steps of cytochrome c oxidase complex (complex IV) biogenesis. Stimulates the translation of MT-CO1 mRNA and is a constituent of early MT-CO1 assembly intermediates. The protein is Transmembrane protein 223 of Bos taurus (Bovine).